The following is a 335-amino-acid chain: Biotin synthase (335 aa).

Positions 43-269 (YFGKKVKLNM…INPTKEIRIA (227 aa)) constitute a Radical SAM core domain. 3 residues coordinate [4Fe-4S] cluster: Cys61, Cys65, and Cys68. The [2Fe-2S] cluster site is built by Cys104, Cys137, Cys197, and Arg267.

It belongs to the radical SAM superfamily. Biotin synthase family. Homodimer. It depends on [4Fe-4S] cluster as a cofactor. Requires [2Fe-2S] cluster as cofactor.

The catalysed reaction is (4R,5S)-dethiobiotin + (sulfur carrier)-SH + 2 reduced [2Fe-2S]-[ferredoxin] + 2 S-adenosyl-L-methionine = (sulfur carrier)-H + biotin + 2 5'-deoxyadenosine + 2 L-methionine + 2 oxidized [2Fe-2S]-[ferredoxin]. Its pathway is cofactor biosynthesis; biotin biosynthesis; biotin from 7,8-diaminononanoate: step 2/2. Catalyzes the conversion of dethiobiotin (DTB) to biotin by the insertion of a sulfur atom into dethiobiotin via a radical-based mechanism. This chain is Biotin synthase, found in Staphylococcus aureus (strain MSSA476).